Here is a 2145-residue protein sequence, read N- to C-terminus: Mediator of RNA polymerase II transcription subunit 12-like protein (2145 aa).

The tract at residues 1–30 (MAAFGLLSYEQRPLKRPRLGPPDVYPQDPK) is disordered. Position 462 is a phosphothreonine (Thr462). Residues 1436–1455 (ELEKGQHLGSSSKKERDRQK) are compositionally biased toward basic and acidic residues. 3 disordered regions span residues 1436 to 1460 (ELEK…KSMS), 1721 to 1802 (RSYY…ISSQ), and 2029 to 2145 (DAVL…PSHF). Over residues 1768–1777 (TKGRKRKTKS) the composition is skewed to basic residues. Over residues 2052-2069 (RQPQVRQQQRLLQMQQPQ) the composition is skewed to low complexity. The segment covering 2070-2079 (QPQPQQPPQP) has biased composition (pro residues). The span at 2089 to 2099 (TLGLQAMQPQQ) shows a compositional bias: polar residues. The segment covering 2104–2124 (RQGLQQTQQQQQTAALVRQLQ) has biased composition (low complexity). Positions 2125–2136 (KQLSSNQPQQGV) are enriched in polar residues.

The protein belongs to the Mediator complex subunit 12 family. In terms of assembly, may be a component of the Mediator complex, which is known to be composed of MED1, MED4, MED6, MED7, MED8, MED9, MED10, MED11, MED12, MED13, MED13L, MED14, MED15, MED16, MED17, MED18, MED19, MED20, MED21, MED22, MED23, MED24, MED25, MED26, MED27, MED29, MED30, MED31, CCNC, CDK8 and CDC2L6/CDK11. The MED12, MED13, CCNC and CDK8 subunits form a distinct module termed the CDK8 module. Mediator containing the CDK8 module is less active than Mediator lacking this module in supporting transcriptional activation. Individual preparations of the Mediator complex lacking one or more distinct subunits have been variously termed ARC, CRSP, DRIP, PC2, SMCC and TRAP.

The protein resides in the nucleus. Its function is as follows. May be a component of the Mediator complex, a coactivator involved in the regulated transcription of nearly all RNA polymerase II-dependent genes. Mediator functions as a bridge to convey information from gene-specific regulatory proteins to the basal RNA polymerase II transcription machinery. Mediator is recruited to promoters by direct interactions with regulatory proteins and serves as a scaffold for the assembly of a functional preinitiation complex with RNA polymerase II and the general transcription factors. The protein is Mediator of RNA polymerase II transcription subunit 12-like protein (MED12L) of Homo sapiens (Human).